The sequence spans 518 residues: Triacylglycerol lipase OBL1 (518 aa).

A helical transmembrane segment spans residues 93–113 (GFVVDFFLNLFSANGGFFGLL). A GXSXG motif is present at residues 337 to 341 (GHSLG). Residue S339 is the Nucleophile of the active site. Catalysis depends on charge relay system residues D403 and H496.

This sequence belongs to the AB hydrolase superfamily. Lipase family. As to expression, expressed in pollen grains, pollen tubes, developing embryos, developing seeds and germinating seeds.

It is found in the lipid droplet. Its subcellular location is the membrane. The catalysed reaction is 1,2-di-(9Z-octadecenoyl)-glycerol + (9Z)-octadecenoate + H(+) = 1,2,3-tri-(9Z-octadecenoyl)-glycerol + H2O. It catalyses the reaction 1-(9Z-octadecenoyl)-glycerol + H2O = glycerol + (9Z)-octadecenoate + H(+). Its function is as follows. Acid lipase that can hydrolyze a range of triacylglycerols without a clear preference for acyl-chains. Can also cleave 1,2-diacylglycerol, 1,3-diacylglycerol and 1-monoacylglycerol, but not phosphatidylcholine, phosphatidylethanolamine, or sterol esters. Required for pollen tube growth. Triacylglycerol hydrolysis by OBL1 may provide acyl groups for the synthesis of membrane lipids in growing pollen tubes. The sequence is that of Triacylglycerol lipase OBL1 from Arabidopsis thaliana (Mouse-ear cress).